We begin with the raw amino-acid sequence, 257 residues long: Auxin-responsive protein IAA17 (257 aa).

Disordered stretches follow at residues 1-51 (MSPP…PAAT) and 85-119 (GKKA…QVVG). Residues 33-37 (LRLGL) carry the EAR-like (transcriptional repression) motif. Residues 105 to 118 (AAAPQAPAAKAQVV) are compositionally biased toward low complexity. Residues 151–239 (FLYVKVSMDG…SCRRLRIMKG (89 aa)) form the PB1 domain.

The protein belongs to the Aux/IAA family. Homodimers and heterodimers. In terms of tissue distribution, highly expressed in etiolated seedlings and flowers. Expressed in roots and green seedlings.

The protein resides in the nucleus. In terms of biological role, aux/IAA proteins are short-lived transcriptional factors that function as repressors of early auxin response genes at low auxin concentrations. This Oryza sativa subsp. japonica (Rice) protein is Auxin-responsive protein IAA17 (IAA17).